Consider the following 557-residue polypeptide: Protein Red (557 aa).

A disordered region spans residues 1 to 90 (MPERDSEPFS…YAKLRQQEIE (90 aa)). Positions 16–25 (DGHDVDDPHS) are enriched in basic and acidic residues. A compositionally biased stretch (low complexity) spans 42 to 53 (TPRAAPTSAPPS). N6-acetyllysine is present on residues Lys-98 and Lys-137. Residue Lys-151 forms a Glycyl lysine isopeptide (Lys-Gly) (interchain with G-Cter in SUMO2) linkage. Residues 181–205 (KEKEEEELMEKPQKETKKDEDPENK) form a disordered region. Phosphoserine is present on Ser-287. Positions 294–303 (RNKKLKKKDK) are enriched in basic residues. The tract at residues 294 to 402 (RNKKLKKKDK…PMDVDKGPGS (109 aa)) is disordered. Over residues 304–313 (GKLEEKKPPE) the composition is skewed to basic and acidic residues. Glycyl lysine isopeptide (Lys-Gly) (interchain with G-Cter in SUMO2) cross-links involve residues Lys-310 and Lys-331. The segment covering 332 to 398 (TPRDKERERY…VDDEPMDVDK (67 aa)) has biased composition (basic and acidic residues). 17 tandem repeats follow at residues 342–343 (RE), 344–345 (RE), 346–347 (RD), 348–349 (RE), 350–351 (RD), 352–353 (RD), 354–355 (RE), 356–357 (RD), 358–359 (RE), 360–361 (RD), 362–363 (RE), 364–365 (RE), 366–367 (RE), 368–369 (RD), 370–371 (RE), 372–373 (RE), and 374–375 (RE). A 17 X 2 AA tandem repeats of R-[ED] region spans residues 342–375 (RERERDRERDRDRERDRERDRERERERDRERERE). Glycyl lysine isopeptide (Lys-Gly) (interchain with G-Cter in SUMO2) cross-links involve residues Lys-386, Lys-388, Lys-404, and Lys-408. Ser-417 and Ser-460 each carry phosphoserine. Thr-485 carries the phosphothreonine modification. Glycyl lysine isopeptide (Lys-Gly) (interchain with G-Cter in SUMO2) cross-links involve residues Lys-496, Lys-501, and Lys-509. Ser-536 is modified (phosphoserine). Glycyl lysine isopeptide (Lys-Gly) (interchain with G-Cter in SUMO2) cross-links involve residues Lys-541, Lys-543, Lys-544, and Lys-553.

This sequence belongs to the RED family. In terms of assembly, component of the spliceosome B complex. Interacts with SMU1. Interacts with MAD1L1. May interact with DHX15.

Its subcellular location is the nucleus. The protein resides in the nucleoplasm. The protein localises to the chromosome. It localises to the cytoplasm. It is found in the cytoskeleton. Its subcellular location is the spindle pole. Involved in pre-mRNA splicing as a component of the spliceosome. Auxiliary spliceosomal protein that regulates selection of alternative splice sites in a small set of target pre-mRNA species. Required for normal mitotic cell cycle progression. Recruits MAD1L1 and MAD2L1 to kinetochores, and is required to trigger the spindle assembly checkpoint. Required for normal accumulation of SMU1. The polypeptide is Protein Red (Ik) (Rattus norvegicus (Rat)).